A 274-amino-acid chain; its full sequence is Exosome complex component Rrp42 (274 aa).

The protein belongs to the RNase PH family. Rrp42 subfamily. Component of the archaeal exosome complex. Forms a hexameric ring-like arrangement composed of 3 Rrp41-Rrp42 heterodimers. The hexameric ring associates with a trimer of Rrp4 and/or Csl4 subunits.

Its subcellular location is the cytoplasm. In terms of biological role, non-catalytic component of the exosome, which is a complex involved in RNA degradation. Contributes to the structuring of the Rrp41 active site. This chain is Exosome complex component Rrp42, found in Pyrococcus abyssi (strain GE5 / Orsay).